A 29-amino-acid chain; its full sequence is Cyclotide mech-7 (29 aa).

A cross-link (cyclopeptide (Gly-Asp)) is located at residues 1 to 29; that stretch reads GIPICGETCTIGTCNTPGCTCSWPVCTRD. 3 disulfides stabilise this stretch: cysteine 5–cysteine 19, cysteine 9–cysteine 21, and cysteine 14–cysteine 26.

This is a cyclic peptide. In terms of processing, contains 3 disulfide bonds.

Probably participates in a plant defense mechanism (Potential). Binds to and induces leakage in phospholipd membranes, particularly ones containing 1-palmitoyl-2-oleophosphatidylethanolamine (POPE). The polypeptide is Cyclotide mech-7 (Melicytus chathamicus (Chatham Island mahoe)).